The following is a 179-amino-acid chain: uncharacterized protein (179 aa).

Composition is skewed to polar residues over residues Pro-1–Gly-37 and Ile-60–Ser-70. Disordered regions lie at residues Pro-1–Lys-41 and Ile-60–Arg-82.

As to expression, component of the acid-soluble and acid-insoluble organic matrix of calcified shell layers (at protein level).

Its subcellular location is the secreted. This is an uncharacterized protein from Haliotis asinina (Donkey's ear abalone).